The sequence spans 358 residues: Peptide chain release factor 1 (358 aa).

Gln233 is subject to N5-methylglutamine.

The protein belongs to the prokaryotic/mitochondrial release factor family. Post-translationally, methylated by PrmC. Methylation increases the termination efficiency of RF1.

It localises to the cytoplasm. Peptide chain release factor 1 directs the termination of translation in response to the peptide chain termination codons UAG and UAA. This chain is Peptide chain release factor 1, found in Listeria innocua serovar 6a (strain ATCC BAA-680 / CLIP 11262).